The primary structure comprises 713 residues: Methionine--tRNA ligase (713 aa).

Positions 31-41 (PYANGSIHLGH) match the 'HIGH' region motif. Zn(2+) contacts are provided by C162, C165, C175, and C178. A 'KMSKS' region motif is present at residues 348 to 352 (KMSKS). K351 serves as a coordination point for ATP. The region spanning 609–713 (DFAKIDLRIV…DGAKAGMRVK (105 aa)) is the tRNA-binding domain.

Belongs to the class-I aminoacyl-tRNA synthetase family. MetG type 1 subfamily. As to quaternary structure, homodimer. Zn(2+) serves as cofactor.

It localises to the cytoplasm. The catalysed reaction is tRNA(Met) + L-methionine + ATP = L-methionyl-tRNA(Met) + AMP + diphosphate. Its function is as follows. Is required not only for elongation of protein synthesis but also for the initiation of all mRNA translation through initiator tRNA(fMet) aminoacylation. The chain is Methionine--tRNA ligase from Colwellia psychrerythraea (strain 34H / ATCC BAA-681) (Vibrio psychroerythus).